We begin with the raw amino-acid sequence, 507 residues long: TOM1-like protein 2 (507 aa).

The VHS domain occupies 20 to 152 (ATDGSLQSED…ELKRRGIEFP (133 aa)). S160 carries the post-translational modification Phosphoserine. T164 carries the phosphothreonine modification. The segment at 164–200 (TPQRSVPEMDPAATIPRSQTQPRTTAGTYSSPPPASY) is disordered. The 89-residue stretch at 219 to 307 (EQIARLRSEL…VFLRYERFER (89 aa)) folds into the GAT domain. The short motif at 329-334 (NLIDLG) is the Clathrin-binding element. The interval 466 to 507 (ERAKAAETVPDLPSPPTEAPAPASNTSTRKKPERSDDALFAL) is disordered. Residues 498-507 (ERSDDALFAL) show a composition bias toward basic and acidic residues.

This sequence belongs to the TOM1 family. As to quaternary structure, interacts with clathrin, SRC and TOLLIP. Interacts with MYO6. In terms of tissue distribution, ubiquitously expressed. Splicing pattern displays tissue specific variation.

Its function is as follows. Acts as a MYO6/Myosin VI adapter protein that targets myosin VI to endocytic structures. May also play a role in recruiting clathrin to endosomes. May regulate growth factor-induced mitogenic signaling. This Mus musculus (Mouse) protein is TOM1-like protein 2 (Tom1l2).